The chain runs to 380 residues: cAMP-dependent protein kinase type I-alpha regulatory subunit (380 aa).

N-acetylmethionine is present on methionine 1. Alanine 2 bears the N-acetylalanine; in cAMP-dependent protein kinase type I-alpha regulatory subunit, N-terminally processed mark. Residues 2 to 135 are dimerization and phosphorylation; sequence ASGTTASEEE…ALAKAIEKNV (134 aa). Phosphoserine occurs at positions 3, 76, and 82. Positions 64–96 are disordered; the sequence is IQNLQKAGSRADSREDEISPPPPNPVVKGRRRR. Residues 95–99 carry the Pseudophosphorylation motif motif; sequence RRGAI. Serine 100 is subject to Phosphoserine. Residues 136–253, glutamate 201, arginine 210, 254–380, glutamate 325, and arginine 334 contribute to the 3',5'-cyclic AMP site; these read LFSH…SKVS and ILES…SLSV. At serine 257 the chain carries Phosphoserine.

It belongs to the cAMP-dependent kinase regulatory chain family. In terms of assembly, the inactive holoenzyme is composed of two regulatory chains and two catalytic chains. Activation by cAMP releases the two active catalytic monomers and the regulatory dimer. Interacts with PRKACA and PRKACB. PRKAR1A also interacts with RFC2; the complex may be involved in cell survival. Interacts with AKAP4. Interacts with RARA; the interaction occurs in the presence of cAMP or FSH and regulates RARA transcriptional activity. Interacts with the phosphorylated form of PJA2. Interacts with CBFA2T3. Interacts with PRKX; regulates this cAMP-dependent protein kinase. Interacts with smAKAP; this interaction may target PRKAR1A to the plasma membrane. Interacts with AICDA. The pseudophosphorylation site binds to the substrate-binding region of the catalytic chain, resulting in the inhibition of its activity. The physiological significance of the in vitro phosphorylation of a proximal serine is unclear. Four types of regulatory chains are found: I-alpha, I-beta, II-alpha, and II-beta. Their expression varies among tissues and is in some cases constitutive and in others inducible.

The protein resides in the cell membrane. Functionally, regulatory subunit of the cAMP-dependent protein kinases involved in cAMP signaling in cells. The chain is cAMP-dependent protein kinase type I-alpha regulatory subunit (PRKAR1A) from Bos taurus (Bovine).